The following is a 287-amino-acid chain: Homoserine kinase (287 aa).

78–88 (PLAHGLGSSSS) serves as a coordination point for ATP.

The protein belongs to the GHMP kinase family. Homoserine kinase subfamily.

It is found in the cytoplasm. It carries out the reaction L-homoserine + ATP = O-phospho-L-homoserine + ADP + H(+). It participates in amino-acid biosynthesis; L-threonine biosynthesis; L-threonine from L-aspartate: step 4/5. Catalyzes the ATP-dependent phosphorylation of L-homoserine to L-homoserine phosphate. In Lactobacillus acidophilus (strain ATCC 700396 / NCK56 / N2 / NCFM), this protein is Homoserine kinase.